The following is a 329-amino-acid chain: Ribosomal RNA small subunit methyltransferase C (329 aa).

Belongs to the methyltransferase superfamily. RsmC family. In terms of assembly, monomer.

The protein resides in the cytoplasm. It catalyses the reaction guanosine(1207) in 16S rRNA + S-adenosyl-L-methionine = N(2)-methylguanosine(1207) in 16S rRNA + S-adenosyl-L-homocysteine + H(+). In terms of biological role, specifically methylates the guanine in position 1207 of 16S rRNA in the 30S particle. This chain is Ribosomal RNA small subunit methyltransferase C, found in Actinobacillus pleuropneumoniae serotype 7 (strain AP76).